An 85-amino-acid polypeptide reads, in one-letter code: Conotoxin Lt28.4 (85 aa).

The N-terminal stretch at 1-21 is a signal peptide; it reads MPKLEMMLLVLLILPLCYIDA. A propeptide spanning residues 22–40 is cleaved from the precursor; the sequence is VGPPPPWNMEDEIIEHWQK.

The protein belongs to the conotoxin D superfamily. Contains 5 disulfide bonds. In terms of tissue distribution, expressed by the venom duct.

Its subcellular location is the secreted. Its function is as follows. Probable neurotoxin. The sequence is that of Conotoxin Lt28.4 from Conus litteratus (Lettered cone).